Reading from the N-terminus, the 361-residue chain is Anthranilate phosphoribosyltransferase (361 aa).

5-phospho-alpha-D-ribose 1-diphosphate is bound by residues Gly80, Gly83–Asp84, Thr88, Asn90–Thr93, Lys108–Ser116, and Ser120. Gly80 serves as a coordination point for anthranilate. Ser92 is a Mg(2+) binding site. Anthranilate is bound at residue Asn111. Arg166 serves as a coordination point for anthranilate. 2 residues coordinate Mg(2+): Asp224 and Glu225. A disordered region spans residues Glu338 to Asp361. The segment covering Ala343–Ala355 has biased composition (low complexity).

This sequence belongs to the anthranilate phosphoribosyltransferase family. In terms of assembly, homodimer. Mg(2+) serves as cofactor.

The catalysed reaction is N-(5-phospho-beta-D-ribosyl)anthranilate + diphosphate = 5-phospho-alpha-D-ribose 1-diphosphate + anthranilate. It functions in the pathway amino-acid biosynthesis; L-tryptophan biosynthesis; L-tryptophan from chorismate: step 2/5. In terms of biological role, catalyzes the transfer of the phosphoribosyl group of 5-phosphorylribose-1-pyrophosphate (PRPP) to anthranilate to yield N-(5'-phosphoribosyl)-anthranilate (PRA). This is Anthranilate phosphoribosyltransferase from Halorubrum lacusprofundi (strain ATCC 49239 / DSM 5036 / JCM 8891 / ACAM 34).